The primary structure comprises 322 residues: Malate dehydrogenase (322 aa).

NAD(+) contacts are provided by residues 10–15 (GSGQIG) and D34. R83 and R89 together coordinate substrate. NAD(+) is bound by residues N96 and 119-121 (ITN). Substrate-binding residues include N121 and R152. The Proton acceptor role is filled by H176.

The protein belongs to the LDH/MDH superfamily. MDH type 3 family.

The enzyme catalyses (S)-malate + NAD(+) = oxaloacetate + NADH + H(+). Catalyzes the reversible oxidation of malate to oxaloacetate. The sequence is that of Malate dehydrogenase from Nitrobacter winogradskyi (strain ATCC 25391 / DSM 10237 / CIP 104748 / NCIMB 11846 / Nb-255).